Consider the following 325-residue polypeptide: Holliday junction branch migration complex subunit RuvB (325 aa).

The large ATPase domain (RuvB-L) stretch occupies residues 1-172; the sequence is MENNELLDIT…FGVVFRLEFY (172 aa). Residues Leu11, Arg12, Gly53, Lys56, Thr57, Thr58, 119-121, Arg162, Tyr172, and Arg209 contribute to the ATP site; that span reads EDF. A Mg(2+)-binding site is contributed by Thr57. The interval 173-243 is small ATPAse domain (RuvB-S); sequence NSEELKEIVK…IAQEALIAMD (71 aa). The tract at residues 246 to 325 is head domain (RuvB-H); sequence DYGLDDMDRK…LKRKIPERLF (80 aa). Arg301 and Arg306 together coordinate DNA.

Belongs to the RuvB family. In terms of assembly, homohexamer. Forms an RuvA(8)-RuvB(12)-Holliday junction (HJ) complex. HJ DNA is sandwiched between 2 RuvA tetramers; dsDNA enters through RuvA and exits via RuvB. An RuvB hexamer assembles on each DNA strand where it exits the tetramer. Each RuvB hexamer is contacted by two RuvA subunits (via domain III) on 2 adjacent RuvB subunits; this complex drives branch migration. In the full resolvosome a probable DNA-RuvA(4)-RuvB(12)-RuvC(2) complex forms which resolves the HJ.

The protein resides in the cytoplasm. It carries out the reaction ATP + H2O = ADP + phosphate + H(+). The RuvA-RuvB-RuvC complex processes Holliday junction (HJ) DNA during genetic recombination and DNA repair, while the RuvA-RuvB complex plays an important role in the rescue of blocked DNA replication forks via replication fork reversal (RFR). RuvA specifically binds to HJ cruciform DNA, conferring on it an open structure. The RuvB hexamer acts as an ATP-dependent pump, pulling dsDNA into and through the RuvAB complex. RuvB forms 2 homohexamers on either side of HJ DNA bound by 1 or 2 RuvA tetramers; 4 subunits per hexamer contact DNA at a time. Coordinated motions by a converter formed by DNA-disengaged RuvB subunits stimulates ATP hydrolysis and nucleotide exchange. Immobilization of the converter enables RuvB to convert the ATP-contained energy into a lever motion, pulling 2 nucleotides of DNA out of the RuvA tetramer per ATP hydrolyzed, thus driving DNA branch migration. The RuvB motors rotate together with the DNA substrate, which together with the progressing nucleotide cycle form the mechanistic basis for DNA recombination by continuous HJ branch migration. Branch migration allows RuvC to scan DNA until it finds its consensus sequence, where it cleaves and resolves cruciform DNA. This Thermodesulfovibrio yellowstonii (strain ATCC 51303 / DSM 11347 / YP87) protein is Holliday junction branch migration complex subunit RuvB.